The following is a 111-amino-acid chain: Large ribosomal subunit protein uL22 (111 aa).

The protein belongs to the universal ribosomal protein uL22 family. As to quaternary structure, part of the 50S ribosomal subunit.

Functionally, this protein binds specifically to 23S rRNA; its binding is stimulated by other ribosomal proteins, e.g. L4, L17, and L20. It is important during the early stages of 50S assembly. It makes multiple contacts with different domains of the 23S rRNA in the assembled 50S subunit and ribosome. The globular domain of the protein is located near the polypeptide exit tunnel on the outside of the subunit, while an extended beta-hairpin is found that lines the wall of the exit tunnel in the center of the 70S ribosome. This chain is Large ribosomal subunit protein uL22, found in Thermoanaerobacter pseudethanolicus (strain ATCC 33223 / 39E) (Clostridium thermohydrosulfuricum).